The chain runs to 155 residues: MNINIICIGKIKDKYINDGIAEFSKRMTSFVSLNIIELKEYNKEDNINISIEKESLEILKQISKSNSYNILLDLEGKEINSENMSKYIENLKNIGISSINFIIGGSNGVSKNVKNSVDMKLKFSHFTFPHQLMRLILLEQVYRWFAISNNIKYHK.

Residues leucine 72 and glycine 104 each coordinate S-adenosyl-L-methionine.

The protein belongs to the RNA methyltransferase RlmH family. In terms of assembly, homodimer.

The protein localises to the cytoplasm. The enzyme catalyses pseudouridine(1915) in 23S rRNA + S-adenosyl-L-methionine = N(3)-methylpseudouridine(1915) in 23S rRNA + S-adenosyl-L-homocysteine + H(+). In terms of biological role, specifically methylates the pseudouridine at position 1915 (m3Psi1915) in 23S rRNA. The chain is Ribosomal RNA large subunit methyltransferase H from Fusobacterium nucleatum subsp. nucleatum (strain ATCC 25586 / DSM 15643 / BCRC 10681 / CIP 101130 / JCM 8532 / KCTC 2640 / LMG 13131 / VPI 4355).